The following is a 277-amino-acid chain: Ribosomally synthesized cyclic peptide asperipin-2a precursor aprA (277 aa).

A signal peptide spans 1–19 (MHLSRYIAVLLSASSFVSA). Propeptides lie at residues 20 to 69 (LPLQ…LDKR), 76 to 88 (KRNA…LDKR), 95 to 107 (KRNA…LDKR), 114 to 126 (KRNA…LDKR), 133 to 145 (KRNA…LDKR), 152 to 164 (KRNA…LDKR), 171 to 183 (KRNA…LDKR), 190 to 202 (KRNA…LDKR), 209 to 221 (KRNA…LDKR), 228 to 240 (KRNA…LDKR), 247 to 259 (KRNA…LDKR), and 266 to 277 (KRNAETPEDLDK).

Post-translationally, aprA is processed by kexin proteases to produce 11 identical copies of the hexapeptide Phe-Tyr-Tyr-Thr-Gly-Tyr, that is further modified aprY and aprR to yield asperipin-2a. The bicyclic structure of asperipin-2a is likely synthesized by the single ustYa family oxidase aprY. The reductase aprR may be required for the final reduction to yield asperipin-2a.

It functions in the pathway secondary metabolite biosynthesis. In terms of biological role, ribosomally synthesized cyclic peptide asperipin-2a precursor; part of the gene cluster that mediates the biosynthesis of the asperipin-2a, a bicyclic peptide that possesses two macrocyclic ether rings consisting of 14- and 17-membered paracyclophans. The aprA translated product contains a 11-fold repeated peptide embedding the hexapeptide Phe-Tyr-Tyr-Thr-Gly-Tyr, that is converted into asperipin-2a. After being excised from the precursor peptide by kexin proteases, the core peptides are cyclized and modified post-translationally by enzymes encoded within the corresponding gene cluster. This is Ribosomally synthesized cyclic peptide asperipin-2a precursor aprA from Aspergillus flavus (strain ATCC 200026 / FGSC A1120 / IAM 13836 / NRRL 3357 / JCM 12722 / SRRC 167).